Reading from the N-terminus, the 416-residue chain is Catalase-peroxidase 2 (416 aa).

A signal peptide spans 1–20 (MLLPLIVFLLSVLIHHRIYS).

It belongs to the peroxidase family. Peroxidase/catalase subfamily. As to quaternary structure, homodimer or homotetramer. Heme b serves as cofactor. Formation of the three residue Trp-Tyr-Met cross-link is important for the catalase, but not the peroxidase activity of the enzyme.

It catalyses the reaction H2O2 + AH2 = A + 2 H2O. The enzyme catalyses 2 H2O2 = O2 + 2 H2O. Functionally, bifunctional enzyme with both catalase and broad-spectrum peroxidase activity. This chain is Catalase-peroxidase 2 (katG2), found in Alkaliphilus metalliredigens (strain QYMF).